The sequence spans 269 residues: GTP cyclohydrolase FolE2 (269 aa).

Belongs to the GTP cyclohydrolase IV family.

The catalysed reaction is GTP + H2O = 7,8-dihydroneopterin 3'-triphosphate + formate + H(+). It functions in the pathway cofactor biosynthesis; 7,8-dihydroneopterin triphosphate biosynthesis; 7,8-dihydroneopterin triphosphate from GTP: step 1/1. Functionally, converts GTP to 7,8-dihydroneopterin triphosphate. The chain is GTP cyclohydrolase FolE2 from Burkholderia mallei (strain NCTC 10229).